A 1436-amino-acid chain; its full sequence is Gag-Pol polyprotein (1436 aa).

Residue glycine 2 is the site of N-myristoyl glycine; by host attachment. The tract at residues 7-31 (VLSGGKLDAWEKIRLRPGGRKKYRL) is interaction with Gp41. The tract at residues 8–43 (LSGGKLDAWEKIRLRPGGRKKYRLKHLVWASRELER) is interaction with host CALM1. The segment at 12–19 (KLDAWEKI) is interaction with host AP3D1. Positions 14-33 (DAWEKIRLRPGGRKKYRLKH) are interaction with membrane phosphatidylinositol 4,5-bisphosphate and RNA. The Nuclear export signal signature appears at 16–22 (WEKIRLR). Residues 26 to 32 (RKKYRLK) carry the Nuclear localization signal motif. Positions 73–77 (EDLQS) are interaction with membrane phosphatidylinositol 4,5-bisphosphate. The tract at residues 110–129 (KNKQRTQQAPAAADKEKDSK) is disordered. Position 134 is a phosphotyrosine; by host (tyrosine 134). Positions 191–229 (NTVGGHQAAMQMLKDTINEEAAEWDRLHPVHAGPIPPGQ) are interaction with human PPIA/CYPA and NUP153. The interval 279 to 365 (YSPVSILDIK…GGPSHKARVL (87 aa)) is dimerization/Multimerization of capsid protein p24. CCHC-type zinc fingers lie at residues 393-410 (VKCSNCGKEGHIARNCRA) and 414-431 (KGCWKCGQEGHQMKDCTG). Basic and acidic residues-rich tracts occupy residues 447–457 (KAREFPPEEAR) and 464–475 (RELRVRRGDHPL). The disordered stretch occupies residues 447–482 (KAREFPPEEARANSPTSRELRVRRGDHPLSEAGAER). The interval 490-494 (PQITL) is dimerization of protease. A Peptidase A2 domain is found at 509 to 578 (KEALLDTGAD…TPVNIIGRNI (70 aa)). Aspartate 514 serves as the catalytic For protease activity; shared with dimeric partner. Dimerization of protease regions lie at residues 538-544 (GIGGFIK) and 577-589 (NILTQMGCTLNLP). Positions 632-822 (EGKISKIGPE…PPFLWMGYEL (191 aa)) constitute a Reverse transcriptase domain. The Mg(2+) site is built by aspartate 698, aspartate 773, and aspartate 774. The interval 815-823 (FLWMGYELH) is RT 'primer grip'. The Tryptophan repeat motif motif lies at 986–1002 (WETWWTEHWQATWIPEW). In terms of domain architecture, RNase H type-1 spans 1022 to 1145 (IEGAETYYVD…VDKLVSSGIR (124 aa)). The Mg(2+) site is built by aspartate 1031, glutamate 1066, aspartate 1086, and aspartate 1137. The segment at 1151–1192 (DGIDKAQVQHEKYHSNWRAMASDFNLPPIVAKEIVASCDKCQ) adopts an Integrase-type zinc-finger fold. Zn(2+) is bound by residues histidine 1160, histidine 1164, cysteine 1188, and cysteine 1191. The 151-residue stretch at 1202–1352 (VDCSPGIWQL…SARERIIDII (151 aa)) folds into the Integrase catalytic domain. Mg(2+) contacts are provided by aspartate 1212, aspartate 1264, and glutamate 1300. The integrase-type DNA-binding region spans 1371-1418 (FRVYYRDSRDPIWKGPAKLLWKGEGAVVIQDNSEIKVVPRRKAKIIRD).

Homotrimer; further assembles as hexamers of trimers. Interacts with gp41 (via C-terminus). Interacts with host CALM1; this interaction induces a conformational change in the Matrix protein, triggering exposure of the myristate group. Interacts with host AP3D1; this interaction allows the polyprotein trafficking to multivesicular bodies during virus assembly. Part of the pre-integration complex (PIC) which is composed of viral genome, matrix protein, Vpr and integrase. In terms of assembly, homodimer; the homodimer further multimerizes as homohexamers or homopentamers. Interacts with human PPIA/CYPA; This interaction stabilizes the capsid. Interacts with human NUP153. Interacts with host PDZD8; this interaction stabilizes the capsid. Interacts with monkey TRIM5; this interaction destabilizes the capsid. As to quaternary structure, homodimer, whose active site consists of two apposed aspartic acid residues. Heterodimer of p66 RT and p51 RT (RT p66/p51). Heterodimerization of RT is essential for DNA polymerase activity. The overall folding of the subdomains is similar in p66 RT and p51 RT but the spatial arrangements of the subdomains are dramatically different. In terms of assembly, homotetramer; may further associate as a homohexadecamer. Part of the pre-integration complex (PIC) which is composed of viral genome, matrix protein, Vpr and integrase. Interacts with human SMARCB1/INI1 and human PSIP1/LEDGF isoform 1. Interacts with human KPNA3; this interaction might play a role in nuclear import of the pre-integration complex. Interacts with human NUP153; this interaction might play a role in nuclear import of the pre-integration complex. Mg(2+) serves as cofactor. Specific enzymatic cleavages by the viral protease yield mature proteins. The protease is released by autocatalytic cleavage. The polyprotein is cleaved during and after budding, this process is termed maturation. Proteolytic cleavage of p66 RT removes the RNase H domain to yield the p51 RT subunit. Nucleocapsid protein p7 might be further cleaved after virus entry. In terms of processing, tyrosine phosphorylated presumably in the virion by a host kinase. Phosphorylation is apparently not a major regulator of membrane association. Post-translationally, phosphorylated possibly by host MAPK1; this phosphorylation is necessary for Pin1-mediated virion uncoating. Methylated by host PRMT6, impairing its function by reducing RNA annealing and the initiation of reverse transcription.

The protein resides in the host cell membrane. It localises to the host endosome. Its subcellular location is the host multivesicular body. It is found in the virion membrane. The protein localises to the host nucleus. The protein resides in the host cytoplasm. It localises to the virion. It carries out the reaction Specific for a P1 residue that is hydrophobic, and P1' variable, but often Pro.. The enzyme catalyses Endohydrolysis of RNA in RNA/DNA hybrids. Three different cleavage modes: 1. sequence-specific internal cleavage of RNA. Human immunodeficiency virus type 1 and Moloney murine leukemia virus enzymes prefer to cleave the RNA strand one nucleotide away from the RNA-DNA junction. 2. RNA 5'-end directed cleavage 13-19 nucleotides from the RNA end. 3. DNA 3'-end directed cleavage 15-20 nucleotides away from the primer terminus.. The catalysed reaction is 3'-end directed exonucleolytic cleavage of viral RNA-DNA hybrid.. It catalyses the reaction DNA(n) + a 2'-deoxyribonucleoside 5'-triphosphate = DNA(n+1) + diphosphate. Protease: The viral protease is inhibited by many synthetic protease inhibitors (PIs), such as amprenavir, atazanavir, indinavir, loprinavir, nelfinavir, ritonavir and saquinavir. Use of protease inhibitors in tritherapy regimens permit more ambitious therapeutic strategies. Reverse transcriptase/ribonuclease H: RT can be inhibited either by nucleoside RT inhibitors (NRTIs) or by non nucleoside RT inhibitors (NNRTIs). NRTIs act as chain terminators, whereas NNRTIs inhibit DNA polymerization by binding a small hydrophobic pocket near the RT active site and inducing an allosteric change in this region. Classical NRTIs are abacavir, adefovir (PMEA), didanosine (ddI), lamivudine (3TC), stavudine (d4T), tenofovir (PMPA), zalcitabine (ddC), and zidovudine (AZT). Classical NNRTIs are atevirdine (BHAP U-87201E), delavirdine, efavirenz (DMP-266), emivirine (I-EBU), and nevirapine (BI-RG-587). The tritherapies used as a basic effective treatment of AIDS associate two NRTIs and one NNRTI. In terms of biological role, mediates, with Gag polyprotein, the essential events in virion assembly, including binding the plasma membrane, making the protein-protein interactions necessary to create spherical particles, recruiting the viral Env proteins, and packaging the genomic RNA via direct interactions with the RNA packaging sequence (Psi). Gag-Pol polyprotein may regulate its own translation, by the binding genomic RNA in the 5'-UTR. At low concentration, the polyprotein would promote translation, whereas at high concentration, the polyprotein would encapsidate genomic RNA and then shut off translation. Functionally, targets the polyprotein to the plasma membrane via a multipartite membrane-binding signal, that includes its myristoylated N-terminus. Matrix protein is part of the pre-integration complex. Implicated in the release from host cell mediated by Vpu. Binds to RNA. Its function is as follows. Forms the conical core that encapsulates the genomic RNA-nucleocapsid complex in the virion. Most core are conical, with only 7% tubular. The core is constituted by capsid protein hexamer subunits. The core is disassembled soon after virion entry. Host restriction factors such as TRIM5-alpha or TRIMCyp bind retroviral capsids and cause premature capsid disassembly, leading to blocks in reverse transcription. Capsid restriction by TRIM5 is one of the factors which restricts HIV-1 to the human species. Host PIN1 apparently facilitates the virion uncoating. On the other hand, interactions with PDZD8 or CYPA stabilize the capsid. Encapsulates and protects viral dimeric unspliced genomic RNA (gRNA). Binds these RNAs through its zinc fingers. Acts as a nucleic acid chaperone which is involved in rearangement of nucleic acid secondary structure during gRNA retrotranscription. Also facilitates template switch leading to recombination. As part of the polyprotein, participates in gRNA dimerization, packaging, tRNA incorporation and virion assembly. In terms of biological role, aspartyl protease that mediates proteolytic cleavages of Gag and Gag-Pol polyproteins during or shortly after the release of the virion from the plasma membrane. Cleavages take place as an ordered, step-wise cascade to yield mature proteins. This process is called maturation. Displays maximal activity during the budding process just prior to particle release from the cell. Also cleaves Nef and Vif, probably concomitantly with viral structural proteins on maturation of virus particles. Hydrolyzes host EIF4GI and PABP1 in order to shut off the capped cellular mRNA translation. The resulting inhibition of cellular protein synthesis serves to ensure maximal viral gene expression and to evade host immune response. Also mediates cleavage of host YTHDF3. Mediates cleavage of host CARD8, thereby activating the CARD8 inflammasome, leading to the clearance of latent HIV-1 in patient CD4(+) T-cells after viral reactivation; in contrast, HIV-1 can evade CARD8-sensing when its protease remains inactive in infected cells prior to viral budding. Functionally, multifunctional enzyme that converts the viral RNA genome into dsDNA in the cytoplasm, shortly after virus entry into the cell. This enzyme displays a DNA polymerase activity that can copy either DNA or RNA templates, and a ribonuclease H (RNase H) activity that cleaves the RNA strand of RNA-DNA heteroduplexes in a partially processive 3' to 5' endonucleasic mode. Conversion of viral genomic RNA into dsDNA requires many steps. A tRNA(3)-Lys binds to the primer-binding site (PBS) situated at the 5'-end of the viral RNA. RT uses the 3' end of the tRNA primer to perform a short round of RNA-dependent minus-strand DNA synthesis. The reading proceeds through the U5 region and ends after the repeated (R) region which is present at both ends of viral RNA. The portion of the RNA-DNA heteroduplex is digested by the RNase H, resulting in a ssDNA product attached to the tRNA primer. This ssDNA/tRNA hybridizes with the identical R region situated at the 3' end of viral RNA. This template exchange, known as minus-strand DNA strong stop transfer, can be either intra- or intermolecular. RT uses the 3' end of this newly synthesized short ssDNA to perform the RNA-dependent minus-strand DNA synthesis of the whole template. RNase H digests the RNA template except for two polypurine tracts (PPTs) situated at the 5'-end and near the center of the genome. It is not clear if both polymerase and RNase H activities are simultaneous. RNase H probably can proceed both in a polymerase-dependent (RNA cut into small fragments by the same RT performing DNA synthesis) and a polymerase-independent mode (cleavage of remaining RNA fragments by free RTs). Secondly, RT performs DNA-directed plus-strand DNA synthesis using the PPTs that have not been removed by RNase H as primers. PPTs and tRNA primers are then removed by RNase H. The 3' and 5' ssDNA PBS regions hybridize to form a circular dsDNA intermediate. Strand displacement synthesis by RT to the PBS and PPT ends produces a blunt ended, linear dsDNA copy of the viral genome that includes long terminal repeats (LTRs) at both ends. Its function is as follows. Catalyzes viral DNA integration into the host chromosome, by performing a series of DNA cutting and joining reactions. This enzyme activity takes place after virion entry into a cell and reverse transcription of the RNA genome in dsDNA. The first step in the integration process is 3' processing. This step requires a complex comprising the viral genome, matrix protein, Vpr and integrase. This complex is called the pre-integration complex (PIC). The integrase protein removes 2 nucleotides from each 3' end of the viral DNA, leaving recessed CA OH's at the 3' ends. In the second step, the PIC enters cell nucleus. This process is mediated through integrase and Vpr proteins, and allows the virus to infect a non dividing cell. This ability to enter the nucleus is specific of lentiviruses, other retroviruses cannot and rely on cell division to access cell chromosomes. In the third step, termed strand transfer, the integrase protein joins the previously processed 3' ends to the 5' ends of strands of target cellular DNA at the site of integration. The 5'-ends are produced by integrase-catalyzed staggered cuts, 5 bp apart. A Y-shaped, gapped, recombination intermediate results, with the 5'-ends of the viral DNA strands and the 3' ends of target DNA strands remaining unjoined, flanking a gap of 5 bp. The last step is viral DNA integration into host chromosome. This involves host DNA repair synthesis in which the 5 bp gaps between the unjoined strands are filled in and then ligated. Since this process occurs at both cuts flanking the HIV genome, a 5 bp duplication of host DNA is produced at the ends of HIV-1 integration. Alternatively, Integrase may catalyze the excision of viral DNA just after strand transfer, this is termed disintegration. In Human immunodeficiency virus type 1 group M subtype H (isolate VI991) (HIV-1), this protein is Gag-Pol polyprotein (gag-pol).